The sequence spans 201 residues: Ras-related protein Rab-35 (201 aa).

Positions 18, 19, 20, 21, 22, 23, 34, 35, 37, 39, and 40 each coordinate GTP. Ser-22 provides a ligand contact to Mg(2+). A Switch 1 motif is present at residues 30 to 42; sequence DNTFSGSYITTIG. Mg(2+) contacts are provided by Thr-40 and Asp-63. Positions 64–80 match the Switch 2 motif; the sequence is TAGQERFRTITSTYYRG. Gly-66 is a binding site for GTP. Thr-72 is subject to Phosphothreonine; by LRRK2. Ser-75 is subject to O-(2-cholinephosphoryl)serine. An O-AMP-tyrosine modification is found at Tyr-77. Asn-120, Lys-121, Asp-123, Ala-151, and Lys-152 together coordinate GTP. Residues Cys-200 and Cys-201 are each lipidated (S-geranylgeranyl cysteine).

The protein belongs to the small GTPase superfamily. Rab family. Interacts with DENND1A and DENND1B; in a nucleotide-dependent manner. Interacts with DENND1C; weak interaction which is nucleotide-independent. Interacts (GTP-bound form) with ACAP2, RUSC2, OCRL MICAL1 and MICALL1; the interaction is direct and probably recruits these effectors to membranes. Interacts with EHD1; the interaction is indirect through MICALL1 and probably recruits EHD1 to membranes. Interacts with GDI1, GDI2, CHM and CHML; phosphorylation at Thr-72 by LRRK2 disrupts these interactions. Requires Mg(2+) as cofactor. Post-translationally, phosphorylation at Thr-72 by LRRK2 prevents the association of regulatory proteins including CHM, CHML and GDP dissociation inhibitors GDI1 and GDI2. AMPylation at Tyr-77 by L.pneumophila DrrA occurs in the switch 2 region and leads to moderate inactivation of the GTPase activity. It appears to prolong the lifetime of the GTP state of RAB1B by restricting access of GTPase effectors to switch 2 and blocking effector-stimulated GTP hydrolysis, thereby rendering RAB35 constitutively active. In terms of processing, phosphocholinated by L.pneumophila AnkX. Both GDP-bound and GTP-bound forms can be phosphocholinated. Phosphocholination inhibits the GEF activity of DENND1A.

The protein resides in the cell membrane. It localises to the membrane. The protein localises to the clathrin-coated pit. It is found in the cytoplasmic vesicle. Its subcellular location is the clathrin-coated vesicle. The protein resides in the endosome. It localises to the melanosome. It carries out the reaction GTP + H2O = GDP + phosphate + H(+). Regulated by guanine nucleotide exchange factors (GEFs) including DENND1A, DENND1B and DENND1C which promote the exchange of bound GDP for free GTP. Regulated by GTPase activating proteins (GAPs) including TBC1D10 and TBC1D13 which increase GTP hydrolysis activity. Inhibited by GDP dissociation inhibitors (GDIs) which prevent Rab-GDP dissociation. Its function is as follows. The small GTPases Rab are key regulators of intracellular membrane trafficking, from the formation of transport vesicles to their fusion with membranes. Rabs cycle between an inactive GDP-bound form and an active GTP-bound form that is able to recruit to membranes different sets of downstream effectors directly responsible for vesicle formation, movement, tethering and fusion. RAB35 is involved in the process of endocytosis and is an essential rate-limiting regulator of the fast recycling pathway back to the plasma membrane. During cytokinesis, required for the postfurrowing terminal steps, namely for intercellular bridge stability and abscission, possibly by controlling phosphatidylinositol 4,5-bis phosphate (PIP2) and SEPT2 localization at the intercellular bridge. May indirectly regulate neurite outgrowth. Together with TBC1D13 may be involved in regulation of insulin-induced glucose transporter SLC2A4/GLUT4 translocation to the plasma membrane in adipocytes. This is Ras-related protein Rab-35 from Homo sapiens (Human).